The chain runs to 279 residues: 3-methyl-2-oxobutanoate hydroxymethyltransferase (279 aa).

Residues Asp44 and Asp83 each coordinate Mg(2+). Residues 44 to 45 (DS), Asp83, and Lys112 each bind 3-methyl-2-oxobutanoate. Glu114 lines the Mg(2+) pocket. Glu181 (proton acceptor) is an active-site residue.

It belongs to the PanB family. Homodecamer; pentamer of dimers. Requires Mg(2+) as cofactor.

It is found in the cytoplasm. It carries out the reaction 3-methyl-2-oxobutanoate + (6R)-5,10-methylene-5,6,7,8-tetrahydrofolate + H2O = 2-dehydropantoate + (6S)-5,6,7,8-tetrahydrofolate. It functions in the pathway cofactor biosynthesis; coenzyme A biosynthesis. In terms of biological role, catalyzes the reversible reaction in which hydroxymethyl group from 5,10-methylenetetrahydrofolate is transferred onto alpha-ketoisovalerate to form ketopantoate. The sequence is that of 3-methyl-2-oxobutanoate hydroxymethyltransferase from Nitrosopumilus maritimus (strain SCM1).